Reading from the N-terminus, the 288-residue chain is Acetyl-coenzyme A carboxylase carboxyl transferase subunit beta (288 aa).

Residues 34-288 (LFAKCPACKH…HLVAFHGGGQ (255 aa)) enclose the CoA carboxyltransferase N-terminal domain. Residues cysteine 38, cysteine 41, cysteine 56, and cysteine 59 each coordinate Zn(2+). The C4-type zinc-finger motif lies at 38–59 (CPACKHMIYKKDLGLAKICPTC).

This sequence belongs to the AccD/PCCB family. As to quaternary structure, acetyl-CoA carboxylase is a heterohexamer composed of biotin carboxyl carrier protein (AccB), biotin carboxylase (AccC) and two subunits each of ACCase subunit alpha (AccA) and ACCase subunit beta (AccD). Zn(2+) is required as a cofactor.

It localises to the cytoplasm. It catalyses the reaction N(6)-carboxybiotinyl-L-lysyl-[protein] + acetyl-CoA = N(6)-biotinyl-L-lysyl-[protein] + malonyl-CoA. Its pathway is lipid metabolism; malonyl-CoA biosynthesis; malonyl-CoA from acetyl-CoA: step 1/1. Functionally, component of the acetyl coenzyme A carboxylase (ACC) complex. Biotin carboxylase (BC) catalyzes the carboxylation of biotin on its carrier protein (BCCP) and then the CO(2) group is transferred by the transcarboxylase to acetyl-CoA to form malonyl-CoA. The chain is Acetyl-coenzyme A carboxylase carboxyl transferase subunit beta from Streptococcus pyogenes serotype M28 (strain MGAS6180).